The primary structure comprises 179 residues: Large ribosomal subunit protein uL5 (179 aa).

This sequence belongs to the universal ribosomal protein uL5 family. Part of the 50S ribosomal subunit; part of the 5S rRNA/L5/L18/L25 subcomplex. Contacts the 5S rRNA and the P site tRNA. Forms a bridge to the 30S subunit in the 70S ribosome.

Its function is as follows. This is one of the proteins that bind and probably mediate the attachment of the 5S RNA into the large ribosomal subunit, where it forms part of the central protuberance. In the 70S ribosome it contacts protein S13 of the 30S subunit (bridge B1b), connecting the 2 subunits; this bridge is implicated in subunit movement. Contacts the P site tRNA; the 5S rRNA and some of its associated proteins might help stabilize positioning of ribosome-bound tRNAs. This Chromobacterium violaceum (strain ATCC 12472 / DSM 30191 / JCM 1249 / CCUG 213 / NBRC 12614 / NCIMB 9131 / NCTC 9757 / MK) protein is Large ribosomal subunit protein uL5.